We begin with the raw amino-acid sequence, 254 residues long: Small ribosomal subunit protein uS2 (254 aa).

Belongs to the universal ribosomal protein uS2 family.

The sequence is that of Small ribosomal subunit protein uS2 from Borrelia recurrentis (strain A1).